The primary structure comprises 491 residues: Nickel-binding protein NikA (491 aa).

Residues 1–18 (MKFKRLATIFSAVLVLSG) form the signal peptide. Cys-19 is lipidated: N-palmitoyl cysteine. A lipid anchor (S-diacylglycerol cysteine) is attached at Cys-19.

This sequence belongs to the bacterial solute-binding protein 5 family. The complex is composed of two ATP-binding proteins (NikD and NikE), two transmembrane proteins (NikB and NikC) and a solute-binding protein (NikA).

The protein localises to the cell membrane. Part of the ABC transporter complex NikABCDE (Opp2) involved in nickel import. Binds nickel and transfers it to the membrane-bound permease. Required for full urease activity and plays a significant role in the virulence of S.aureus during urinary tract infection (UTI). May bind nickel via a nickel-chelator. This Staphylococcus aureus (strain NCTC 8325 / PS 47) protein is Nickel-binding protein NikA.